A 333-amino-acid polypeptide reads, in one-letter code: Protoheme IX farnesyltransferase (333 aa).

Helical transmembrane passes span 31-51 (VMSL…APIH), 52-72 (PVLA…SGAL), 115-135 (MFLG…TIVF), 152-172 (IVIG…AATG), 178-198 (AWLM…ALSL), 223-243 (KQIL…VLTG), 244-264 (LGGP…LLLA), and 303-323 (LFAF…GEAV).

Belongs to the UbiA prenyltransferase family. Protoheme IX farnesyltransferase subfamily.

Its subcellular location is the cell inner membrane. The enzyme catalyses heme b + (2E,6E)-farnesyl diphosphate + H2O = Fe(II)-heme o + diphosphate. Its pathway is porphyrin-containing compound metabolism; heme O biosynthesis; heme O from protoheme: step 1/1. Functionally, converts heme B (protoheme IX) to heme O by substitution of the vinyl group on carbon 2 of heme B porphyrin ring with a hydroxyethyl farnesyl side group. The chain is Protoheme IX farnesyltransferase from Caulobacter vibrioides (strain ATCC 19089 / CIP 103742 / CB 15) (Caulobacter crescentus).